The chain runs to 239 residues: Octanoyltransferase (239 aa).

Positions 48–236 constitute a BPL/LPL catalytic domain; it reads DGGDELVWLV…AFEAVFGETT (189 aa). Substrate-binding positions include 87-94, 167-169, and 180-182; these read RGGEYTYH, ALG, and GLS. Cys-198 (acyl-thioester intermediate) is an active-site residue.

It belongs to the LipB family.

Its subcellular location is the cytoplasm. It catalyses the reaction octanoyl-[ACP] + L-lysyl-[protein] = N(6)-octanoyl-L-lysyl-[protein] + holo-[ACP] + H(+). Its pathway is protein modification; protein lipoylation via endogenous pathway; protein N(6)-(lipoyl)lysine from octanoyl-[acyl-carrier-protein]: step 1/2. Its function is as follows. Catalyzes the transfer of endogenously produced octanoic acid from octanoyl-acyl-carrier-protein onto the lipoyl domains of lipoate-dependent enzymes. Lipoyl-ACP can also act as a substrate although octanoyl-ACP is likely to be the physiological substrate. This chain is Octanoyltransferase, found in Rhizobium johnstonii (strain DSM 114642 / LMG 32736 / 3841) (Rhizobium leguminosarum bv. viciae).